The chain runs to 20 residues: Blooming-related protein 2 (20 aa).

A disordered region spans residues 1–20; it reads VSAEYLERQGPKDDXDCFDD.

Possible 'checkpoint' protein for cell division in the blooming process. This Prorocentrum triestinum (Red tide alga) protein is Blooming-related protein 2.